The following is an 885-amino-acid chain: Leucine--tRNA ligase (885 aa).

Positions 48-58 (PYPSGKLHMGH) match the 'HIGH' region motif. The 'KMSKS' region signature appears at 639–643 (TMSKS). An ATP-binding site is contributed by K642.

The protein belongs to the class-I aminoacyl-tRNA synthetase family.

The protein localises to the cytoplasm. The catalysed reaction is tRNA(Leu) + L-leucine + ATP = L-leucyl-tRNA(Leu) + AMP + diphosphate. This Bordetella parapertussis (strain 12822 / ATCC BAA-587 / NCTC 13253) protein is Leucine--tRNA ligase.